Here is a 326-residue protein sequence, read N- to C-terminus: Nucleoporin Nup37 (326 aa).

WD repeat units follow at residues 70-117 (HHGV…KNEY), 122-162 (GHSD…TAHF), 164-203 (LHSP…AILS), and 294-325 (GSVA…WVTE).

As to quaternary structure, component of the Nup107-160 subcomplex of the nuclear pore complex (NPC). The Nup107-160 subcomplex includes NUP160, NUP133, NUP107, NUP98, NUP85, NUP43, NUP37, SEH1 and SEC13.

Its subcellular location is the chromosome. The protein resides in the centromere. It localises to the kinetochore. The protein localises to the nucleus. It is found in the nuclear pore complex. Its function is as follows. Component of the Nup107-160 subcomplex of the nuclear pore complex (NPC). The Nup107-160 subcomplex is required for the assembly of a functional NPC. The Nup107-160 subcomplex is also required for normal kinetochore microtubule attachment, mitotic progression and chromosome segregation. This is Nucleoporin Nup37 (Nup37) from Mus musculus (Mouse).